The sequence spans 470 residues: Pre-mycofactocin glycosyltransferase (470 aa).

The chain crosses the membrane as a helical span at residues 315 to 335 (LVISGGALMAWILMSIGTGLG).

It belongs to the glycosyltransferase 2 family.

Its subcellular location is the cell membrane. Its function is as follows. Involved in the biosynthesis of the enzyme cofactor mycofactocin (MFT). Acts as a glycosyltransferase that catalyzes the oligoglycosylation of pre-mycofactocin (PMFT), adding up to nine beta-1,4-linked glucose residues. Is required for the in vivo ethanol assimilation in M.smegmatis. The protein is Pre-mycofactocin glycosyltransferase (mftF) of Mycobacterium tuberculosis (strain CDC 1551 / Oshkosh).